Consider the following 192-residue polypeptide: Nucleotidase CA_C3379 (192 aa).

This sequence belongs to the 5'(3')-deoxyribonucleotidase family. Mg(2+) serves as cofactor.

The enzyme catalyses sugar phosphate + H2O = sugar + phosphate.. Its function is as follows. Catalyzes the dephosphorylation of nucleotide monophosphates and of different sugar phosphates in vitro. The polypeptide is Nucleotidase CA_C3379 (Clostridium acetobutylicum (strain ATCC 824 / DSM 792 / JCM 1419 / IAM 19013 / LMG 5710 / NBRC 13948 / NRRL B-527 / VKM B-1787 / 2291 / W)).